We begin with the raw amino-acid sequence, 272 residues long: MLRIAGRRASSLSRWPVRSVAPSSSAFISANHFSSDDDSSSPRSISPSLASVFLHHTRGFSSNSVSHAHDMGLVPDLPPTVAAIKNPTSKIVYDEHNHERYPPGDPSKRAFAYFVLTGGRFVYASLVRLLILKFVLSMSASKDVLALASLEVDLSSIEPGTTVTVKWRGKPVFIRRRTEDDINLANSVDLGSLRDPQQDAERVKSPEWLVVIGVCTHLGCIPLPNAGDFGGWFCPCHGSHYDISGRIRKGPAPYNLEVPTYSFLEENKLLIG.

Residues 1–60 (MLRIAGRRASSLSRWPVRSVAPSSSAFISANHFSSDDDSSSPRSISPSLASVFLHHTRGF) constitute a mitochondrion transit peptide. Residues 61–109 (SSNSVSHAHDMGLVPDLPPTVAAIKNPTSKIVYDEHNHERYPPGDPSKR) lie on the Mitochondrial matrix side of the membrane. The helical transmembrane segment at 110-132 (AFAYFVLTGGRFVYASLVRLLIL) threads the bilayer. At 133–272 (KFVLSMSASK…FLEENKLLIG (140 aa)) the chain is on the mitochondrial intermembrane side. Positions 182–270 (INLANSVDLG…YSFLEENKLL (89 aa)) constitute a Rieske domain. Positions 215, 217, 234, and 237 each coordinate [2Fe-2S] cluster. A disulfide bridge links Cys-220 with Cys-236.

It belongs to the Rieske iron-sulfur protein family. As to quaternary structure, component of the ubiquinol-cytochrome c oxidoreductase (cytochrome b-c1 complex, complex III, CIII), a multisubunit enzyme composed of 3 respiratory subunits cytochrome b, cytochrome c1 and Rieske protein, 2 core protein subunits, and several low-molecular weight protein subunits. The complex exists as an obligatory dimer and forms supercomplexes (SCs) in the inner mitochondrial membrane with cytochrome c oxidase (complex IV, CIV). [2Fe-2S] cluster is required as a cofactor. In terms of tissue distribution, high levels are seen in the flowers while a low level expression is seen in the roots, leaves and stems.

It is found in the mitochondrion inner membrane. The enzyme catalyses a quinol + 2 Fe(III)-[cytochrome c](out) = a quinone + 2 Fe(II)-[cytochrome c](out) + 2 H(+)(out). In terms of biological role, component of the ubiquinol-cytochrome c oxidoreductase, a multisubunit transmembrane complex that is part of the mitochondrial electron transport chain which drives oxidative phosphorylation. The respiratory chain contains 3 multisubunit complexes succinate dehydrogenase (complex II, CII), ubiquinol-cytochrome c oxidoreductase (cytochrome b-c1 complex, complex III, CIII) and cytochrome c oxidase (complex IV, CIV), that cooperate to transfer electrons derived from NADH and succinate to molecular oxygen, creating an electrochemical gradient over the inner membrane that drives transmembrane transport and the ATP synthase. The cytochrome b-c1 complex catalyzes electron transfer from ubiquinol to cytochrome c, linking this redox reaction to translocation of protons across the mitochondrial inner membrane, with protons being carried across the membrane as hydrogens on the quinol. In the process called Q cycle, 2 protons are consumed from the matrix, 4 protons are released into the intermembrane space and 2 electrons are passed to cytochrome c. The Rieske protein is a catalytic core subunit containing a [2Fe-2S] iron-sulfur cluster. It cycles between 2 conformational states during catalysis to transfer electrons from the quinol bound in the Q(0) site in cytochrome b to cytochrome c1. The polypeptide is Cytochrome b-c1 complex subunit Rieske-2, mitochondrial (Nicotiana tabacum (Common tobacco)).